Reading from the N-terminus, the 169-residue chain is Ecotin (169 aa).

Positions 1-21 (MKKCSIILASVLLATSINAIA) are cleaved as a signal peptide. A disulfide bridge connects residues Cys-76 and Cys-113.

It belongs to the protease inhibitor I11 (ecotin) family. As to quaternary structure, homodimer.

The protein localises to the periplasm. Functionally, general inhibitor of pancreatic serine proteases: inhibits chymotrypsin, trypsin, elastases, factor X, kallikrein as well as a variety of other proteases. The polypeptide is Ecotin (Yersinia pseudotuberculosis serotype O:1b (strain IP 31758)).